Reading from the N-terminus, the 210-residue chain is MLTANKLLPQGHGLAPVLLKRAATVELDWDVRQKSRFAATDSTGRELGVFLPRGTVVRGGDVLVAEDGSMVRVVAAPQAVLRITHCTQHGSPFDLTRAAYHLGNRHVPIELRPDHLQIEPDHVLADMLRAMHLIVTEQQAPFEPEGGAYAAGGHGHGHDHPHHDHGHDHAHAHAHGTEACDHEHSHDHDCGHHHDHGQDYGHAHPHSLAR.

The segment at 144-210 (PEGGAYAAGG…GHAHPHSLAR (67 aa)) is disordered. Residues 156–202 (HGHDHPHHDHGHDHAHAHAHGTEACDHEHSHDHDCGHHHDHGQDYGH) are compositionally biased toward basic and acidic residues.

This sequence belongs to the UreE family.

Its subcellular location is the cytoplasm. In terms of biological role, involved in urease metallocenter assembly. Binds nickel. Probably functions as a nickel donor during metallocenter assembly. In Paracidovorax citrulli (strain AAC00-1) (Acidovorax citrulli), this protein is Urease accessory protein UreE.